We begin with the raw amino-acid sequence, 701 residues long: Larval serum protein 2 (701 aa).

The first 21 residues, 1–21 (MKSFTVIALAAVALLATLGQA), serve as a signal peptide directing secretion. N204 carries an N-linked (GlcNAc...) asparagine glycan.

The protein belongs to the hemocyanin family. In terms of assembly, homohexamer.

The protein localises to the secreted. It is found in the extracellular space. Functionally, larval storage protein (LSP) which may serve as a store of amino acids for synthesis of adult proteins. The protein is Larval serum protein 2 (Lsp2) of Drosophila melanogaster (Fruit fly).